The primary structure comprises 46 residues: Photosystem II reaction center protein K (46 aa).

Residues 1–9 (MTTLALVLA) constitute a propeptide that is removed on maturation. Residues 18 to 38 (FAPIVDVLPVIPVFFILLAFV) form a helical membrane-spanning segment.

The protein belongs to the PsbK family. PSII is composed of 1 copy each of membrane proteins PsbA, PsbB, PsbC, PsbD, PsbE, PsbF, PsbH, PsbI, PsbJ, PsbK, PsbL, PsbM, PsbT, PsbX, PsbY, PsbZ, Psb30/Ycf12, at least 3 peripheral proteins of the oxygen-evolving complex and a large number of cofactors. It forms dimeric complexes. This protein is tightly associated with CP43 (psbC), one of the core proteins.

It localises to the plastid. The protein resides in the chloroplast thylakoid membrane. Its function is as follows. One of the components of the core complex of photosystem II (PSII). PSII is a light-driven water:plastoquinone oxidoreductase that uses light energy to abstract electrons from H(2)O, generating O(2) and a proton gradient subsequently used for ATP formation. It consists of a core antenna complex that captures photons, and an electron transfer chain that converts photonic excitation into a charge separation. Required for assembly and/or stability of PSII. The sequence is that of Photosystem II reaction center protein K from Chlamydomonas reinhardtii (Chlamydomonas smithii).